The sequence spans 173 residues: Crossover junction endodeoxyribonuclease RuvC (173 aa).

Active-site residues include aspartate 8, glutamate 67, and aspartate 139. 3 residues coordinate Mg(2+): aspartate 8, glutamate 67, and aspartate 139.

It belongs to the RuvC family. As to quaternary structure, homodimer which binds Holliday junction (HJ) DNA. The HJ becomes 2-fold symmetrical on binding to RuvC with unstacked arms; it has a different conformation from HJ DNA in complex with RuvA. In the full resolvosome a probable DNA-RuvA(4)-RuvB(12)-RuvC(2) complex forms which resolves the HJ. Mg(2+) serves as cofactor.

It is found in the cytoplasm. It carries out the reaction Endonucleolytic cleavage at a junction such as a reciprocal single-stranded crossover between two homologous DNA duplexes (Holliday junction).. Its function is as follows. The RuvA-RuvB-RuvC complex processes Holliday junction (HJ) DNA during genetic recombination and DNA repair. Endonuclease that resolves HJ intermediates. Cleaves cruciform DNA by making single-stranded nicks across the HJ at symmetrical positions within the homologous arms, yielding a 5'-phosphate and a 3'-hydroxyl group; requires a central core of homology in the junction. The consensus cleavage sequence is 5'-(A/T)TT(C/G)-3'. Cleavage occurs on the 3'-side of the TT dinucleotide at the point of strand exchange. HJ branch migration catalyzed by RuvA-RuvB allows RuvC to scan DNA until it finds its consensus sequence, where it cleaves and resolves the cruciform DNA. This is Crossover junction endodeoxyribonuclease RuvC from Vibrio atlanticus (strain LGP32) (Vibrio splendidus (strain Mel32)).